Consider the following 450-residue polypeptide: Signal recognition particle 54 kDa protein (450 aa).

GTP-binding positions include 107 to 114 (GIQGSGKT), 188 to 192 (DTAGR), and 247 to 250 (TKLD).

The protein belongs to the GTP-binding SRP family. SRP54 subfamily. As to quaternary structure, part of the signal recognition particle protein translocation system, which is composed of SRP and FtsY. Archaeal SRP consists of a 7S RNA molecule of 300 nucleotides and two protein subunits: SRP54 and SRP19.

The protein localises to the cytoplasm. It catalyses the reaction GTP + H2O = GDP + phosphate + H(+). Its function is as follows. Involved in targeting and insertion of nascent membrane proteins into the cytoplasmic membrane. Binds to the hydrophobic signal sequence of the ribosome-nascent chain (RNC) as it emerges from the ribosomes. The SRP-RNC complex is then targeted to the cytoplasmic membrane where it interacts with the SRP receptor FtsY. This Methanococcus maripaludis (strain C5 / ATCC BAA-1333) protein is Signal recognition particle 54 kDa protein.